We begin with the raw amino-acid sequence, 213 residues long: Uridine kinase (213 aa).

15 to 22 (GASASGKS) contacts ATP.

This sequence belongs to the uridine kinase family.

The protein localises to the cytoplasm. It catalyses the reaction uridine + ATP = UMP + ADP + H(+). It carries out the reaction cytidine + ATP = CMP + ADP + H(+). Its pathway is pyrimidine metabolism; CTP biosynthesis via salvage pathway; CTP from cytidine: step 1/3. It participates in pyrimidine metabolism; UMP biosynthesis via salvage pathway; UMP from uridine: step 1/1. The protein is Uridine kinase of Klebsiella pneumoniae (strain 342).